Here is a 114-residue protein sequence, read N- to C-terminus: Large ribosomal subunit protein bL20c (114 aa).

It belongs to the bacterial ribosomal protein bL20 family.

The protein localises to the plastid. It localises to the chloroplast. In terms of biological role, binds directly to 23S ribosomal RNA and is necessary for the in vitro assembly process of the 50S ribosomal subunit. It is not involved in the protein synthesizing functions of that subunit. The polypeptide is Large ribosomal subunit protein bL20c (Psilotum nudum (Whisk fern)).